The sequence spans 460 residues: ATP synthase subunit beta 1 (460 aa).

149 to 156 (GGAGVGKT) serves as a coordination point for ATP.

The protein belongs to the ATPase alpha/beta chains family. As to quaternary structure, F-type ATPases have 2 components, CF(1) - the catalytic core - and CF(0) - the membrane proton channel. CF(1) has five subunits: alpha(3), beta(3), gamma(1), delta(1), epsilon(1). CF(0) has three main subunits: a(1), b(2) and c(9-12). The alpha and beta chains form an alternating ring which encloses part of the gamma chain. CF(1) is attached to CF(0) by a central stalk formed by the gamma and epsilon chains, while a peripheral stalk is formed by the delta and b chains.

It is found in the cell inner membrane. The catalysed reaction is ATP + H2O + 4 H(+)(in) = ADP + phosphate + 5 H(+)(out). In terms of biological role, produces ATP from ADP in the presence of a proton gradient across the membrane. The catalytic sites are hosted primarily by the beta subunits. The sequence is that of ATP synthase subunit beta 1 from Nitrosomonas eutropha (strain DSM 101675 / C91 / Nm57).